The primary structure comprises 156 residues: Putative pre-16S rRNA nuclease (156 aa).

The protein belongs to the YqgF nuclease family.

It is found in the cytoplasm. In terms of biological role, could be a nuclease involved in processing of the 5'-end of pre-16S rRNA. The protein is Putative pre-16S rRNA nuclease of Ehrlichia canis (strain Jake).